The sequence spans 293 residues: Probable flavonol synthase 6 (293 aa).

In terms of domain architecture, Fe2OG dioxygenase spans 156–253 (KAQYVMRINY…RMSWPILVEP (98 aa)). 2-oxoglutarate is bound at residue 164–166 (NYY). The Fe cation site is built by His178, Asp180, and His234. Residue 244–246 (RMS) coordinates 2-oxoglutarate.

The protein belongs to the iron/ascorbate-dependent oxidoreductase family. It depends on Fe(2+) as a cofactor.

It catalyses the reaction a (2R,3R)-dihydroflavonol + 2-oxoglutarate + O2 = a flavonol + succinate + CO2 + H2O. The protein operates within secondary metabolite biosynthesis; flavonoid biosynthesis. The chain is Probable flavonol synthase 6 (FLS6) from Arabidopsis thaliana (Mouse-ear cress).